Here is a 107-residue protein sequence, read N- to C-terminus: Thioredoxin-1 (107 aa).

The region spanning 2 to 106 (ASVRTMTDFH…LTNMMAKLVK (105 aa)) is the Thioredoxin domain. Active-site nucleophile residues include Cys31 and Cys34. A disulfide bridge links Cys31 with Cys34.

This sequence belongs to the thioredoxin family.

The protein resides in the nucleus. Participates in various redox reactions through the reversible oxidation of its active center dithiol to a disulfide and catalyzes dithiol-disulfide exchange reactions. As a reducing substrate of peroxiredoxin 1, thioredoxin 2 is preferred over thioredoxin 1. Required for female meiosis and early embryonic development. The chain is Thioredoxin-1 (dhd) from Drosophila yakuba (Fruit fly).